The sequence spans 668 residues: Echinocandin B biosynthetic cluster protein J (668 aa).

5 disordered regions span residues 1-20, 92-113, 224-322, 330-349, and 483-506; these read MHFA…DQSL, YTPP…PPTP, PLDH…QSAD, EVAE…SIPT, and NCSS…PPLK. Residues 96-106 show a composition bias toward polar residues; sequence SLDSRSSATPP. Residues 264–275 show a composition bias toward pro residues; it reads NPEPGTPTPPSP. Polar residues predominate over residues 311-322; the sequence is YRSTPSPCQSAD. The span at 484 to 494 shows a compositional bias: low complexity; it reads CSSSSCSSSAS. A compositionally biased stretch (basic and acidic residues) spans 495-505; it reads KKNEEKREPPL.

It participates in antifungal biosynthesis. Its function is as follows. Part of the gene cluster that mediates the biosynthesis of echinocandin B, a fungal lipidated cyclic hexapeptide that acts as an antifungal agent. Linoleoyl-AMP, produced by the fatty-acyl-AMP ligase ecdI, is transferred to the initiation carrier domain (T0) of ecdA. The linoleoyl-S-phosphopantetheinyl-T0 is sequentially extended with L-ornithine, L-threonine, L-proline, L-homotyrosine, L-threonine, and 4R-methyl-L-proline to form the linear hexapeptide. Thereafter, the terminal condensation (C7) performs macrocyclization of the NRPS product and the cyclic scaffold is released from ecdA. All six of the amino acid residues are hydroxylated, including 4R,5R-dihydroxy-L-ornithine, 4R-hydroxyl-L-proline, 3S,4S-dihydroxy-L-homotyrosine, and 3S-hydroxyl-4S-methyl-L-prolin. In the pathway, all the hydroxylation reactions are proposed to occur following completion of the cyclic peptide, so the unhydroxylated precursor produced by ecdA will undergo six rounds of hydroxylation. Five hydroxylase genes (ecdG, ecdH, ecdK, htyE and htyF) are embedded within the echinocandin B (ecd) and L-homotyrosine (hty) clusters. This Aspergillus rugulosus (Emericella rugulosa) protein is Echinocandin B biosynthetic cluster protein J.